Consider the following 1171-residue polypeptide: DNA-directed RNA polymerase subunit beta (1171 aa).

Belongs to the RNA polymerase beta chain family. In terms of assembly, the RNAP catalytic core consists of 2 alpha, 1 beta, 1 beta' and 1 omega subunit. When a sigma factor is associated with the core the holoenzyme is formed, which can initiate transcription.

It carries out the reaction RNA(n) + a ribonucleoside 5'-triphosphate = RNA(n+1) + diphosphate. DNA-dependent RNA polymerase catalyzes the transcription of DNA into RNA using the four ribonucleoside triphosphates as substrates. This is DNA-directed RNA polymerase subunit beta from Kineococcus radiotolerans (strain ATCC BAA-149 / DSM 14245 / SRS30216).